Here is a 139-residue protein sequence, read N- to C-terminus: Putative pre-16S rRNA nuclease (139 aa).

It belongs to the YqgF nuclease family.

It is found in the cytoplasm. Could be a nuclease involved in processing of the 5'-end of pre-16S rRNA. The protein is Putative pre-16S rRNA nuclease of Streptococcus equi subsp. zooepidemicus (strain H70).